The chain runs to 354 residues: Putative Xaa-Pro aminopeptidase (354 aa).

Positions 213, 224, 290, 319, and 333 each coordinate Mn(2+).

It belongs to the peptidase M24B family. Mn(2+) serves as cofactor.

It carries out the reaction Release of any N-terminal amino acid, including proline, that is linked to proline, even from a dipeptide or tripeptide.. This Mycoplasma genitalium (strain ATCC 33530 / DSM 19775 / NCTC 10195 / G37) (Mycoplasmoides genitalium) protein is Putative Xaa-Pro aminopeptidase (pepP).